Reading from the N-terminus, the 234-residue chain is Ubiquitin thioesterase OTUB2 (234 aa).

The OTU domain occupies threonine 40–alanine 231. The active site involves aspartate 48. The Nucleophile role is filled by cysteine 51. Catalysis depends on residues histidine 205 and histidine 224.

It belongs to the peptidase C65 family.

It carries out the reaction Thiol-dependent hydrolysis of ester, thioester, amide, peptide and isopeptide bonds formed by the C-terminal Gly of ubiquitin (a 76-residue protein attached to proteins as an intracellular targeting signal).. Functionally, hydrolase that can remove conjugated ubiquitin from proteins in vitro and may therefore play an important regulatory role at the level of protein turnover by preventing degradation. Mediates deubiquitination of 'Lys-11'-,'Lys-48'- and 'Lys-63'-linked polyubiquitin chains, with a preference for 'Lys-63'-linked polyubiquitin chains. This Mus musculus (Mouse) protein is Ubiquitin thioesterase OTUB2 (Otub2).